Consider the following 199-residue polypeptide: Probable thymidylate kinase (199 aa).

9-16 (GIDGCGKT) contacts ATP.

It belongs to the thymidylate kinase family.

The enzyme catalyses dTMP + ATP = dTDP + ADP. The chain is Probable thymidylate kinase from Methanococcus maripaludis (strain DSM 14266 / JCM 13030 / NBRC 101832 / S2 / LL).